Consider the following 71-residue polypeptide: Small ribosomal subunit protein bS21 (71 aa).

Over residues 34–44 (RREHYEKPTSE) the composition is skewed to basic and acidic residues. A disordered region spans residues 34 to 71 (RREHYEKPTSERKRKKAAAVKRHAKKLSRDNARRTRLY). Residues 45–59 (RKRKKAAAVKRHAKK) are compositionally biased toward basic residues. A compositionally biased stretch (basic and acidic residues) spans 60–71 (LSRDNARRTRLY).

The protein belongs to the bacterial ribosomal protein bS21 family.

The sequence is that of Small ribosomal subunit protein bS21 from Idiomarina loihiensis (strain ATCC BAA-735 / DSM 15497 / L2-TR).